The following is a 378-amino-acid chain: Alcohol dehydrogenase 1 (378 aa).

C48 contributes to the Zn(2+) binding site. Residue 49–53 (HTDVL) coordinates NAD(+). Zn(2+)-binding residues include H69, C99, C102, C105, C113, and C177. Residues 202–207 (GIGTVG), D226, K231, 274–276 (TGV), 297–299 (IGA), and 321–323 (TTF) each bind NAD(+).

Belongs to the zinc-containing alcohol dehydrogenase family. Class-IV subfamily. As to quaternary structure, homodimer. Zn(2+) serves as cofactor. In terms of tissue distribution, expressed in flowers and disk florets.

The protein operates within isoprenoid biosynthesis. The chain is Alcohol dehydrogenase 1 from Tanacetum cinerariifolium (Dalmatian daisy).